The sequence spans 412 residues: DnaJ homolog subfamily A member 2 (412 aa).

A J domain is found at 8 to 70 (KLYDILGVPP…EKRELYDRYG (63 aa)). Position 39 is an N6-acetyllysine (lysine 39). 2 positions are modified to phosphoserine: serine 78 and serine 123. The CR-type zinc finger occupies 130–214 (GKTTKLQLSK…CEGKKVIKEV (85 aa)). Lysine 134 is covalently cross-linked (Glycyl lysine isopeptide (Lys-Gly) (interchain with G-Cter in SUMO2)). Positions 143 and 146 each coordinate Zn(2+). Residues 143-150 (CSACSGQG) form a CXXCXGXG motif repeat. Lysine 152 carries the post-translational modification N6-acetyllysine. Zn(2+)-binding residues include cysteine 159, cysteine 162, cysteine 186, cysteine 189, cysteine 202, and cysteine 205. CXXCXGXG motif repeat units lie at residues 159 to 166 (CSACRGRG), 186 to 193 (CSDCNGEG), and 202 to 209 (CKKCEGKK). The segment at 365-412 (IGETEEVELQEFDSTRGSGGGQRREAYNDSSDEESSSHHGPGVQCAHQ) is disordered. Tyrosine 391 is subject to Phosphotyrosine. Phosphoserine occurs at positions 394 and 395. Cysteine 409 is modified (cysteine methyl ester). A lipid anchor (S-farnesyl cysteine) is attached at cysteine 409. A propeptide spans 410–412 (AHQ) (removed in mature form).

The protein resides in the membrane. Functionally, co-chaperone of Hsc70. Stimulates ATP hydrolysis and the folding of unfolded proteins mediated by HSPA1A/B (in vitro). This chain is DnaJ homolog subfamily A member 2 (Dnaja2), found in Mus musculus (Mouse).